Reading from the N-terminus, the 472-residue chain is Bone morphogenetic protein 3 (472 aa).

The signal sequence occupies residues 1 to 22 (MAGASRLLFLWLGCFCVSLAQG). The propeptide occupies 23–362 (ERPKPPFPEL…EQTLKKARRK (340 aa)). Basic and acidic residues predominate over residues 27-37 (PPFPELRKAVP). The interval 27-53 (PPFPELRKAVPGDRTAGGGPDSELQPQ) is disordered. Asn117, Asn141, Asn175, and Asn220 each carry an N-linked (GlcNAc...) asparagine glycan. The disordered stretch occupies residues 320-350 (PYKTLQAQAPEKSKNKKKQRKGPHRKSQTLQ). Basic residues predominate over residues 333–346 (KNKKKQRKGPHRKS). 3 disulfide bridges follow: Cys370–Cys437, Cys399–Cys469, and Cys403–Cys471. Asn463 is a glycosylation site (N-linked (GlcNAc...) asparagine).

This sequence belongs to the TGF-beta family. In terms of assembly, homodimer; disulfide-linked. Interacts with type II receptor ACVR2B. In terms of tissue distribution, expressed in adult and fetal cartilage.

The protein localises to the secreted. Functionally, growth factor of the TGF-beta superfamily that plays an essential role in developmental process by inducing and patterning early skeletal formation and by negatively regulating bone density. Antagonizes the ability of certain osteogenic BMPs to induce osteoprogenitor differentiation and ossification. Initiates signaling cascades by associating with type II receptor ACVR2B to activate SMAD2-dependent and SMAD-independent signaling cascades including TAK1 and JNK pathways. The polypeptide is Bone morphogenetic protein 3 (BMP3) (Homo sapiens (Human)).